Reading from the N-terminus, the 268-residue chain is 4-hydroxy-tetrahydrodipicolinate reductase (268 aa).

Residues 8–13, aspartate 34, 95–97, and 121–124 contribute to the NAD(+) site; these read GACGKM, GTT, and APNF. Catalysis depends on histidine 151, which acts as the Proton donor/acceptor. Position 152 (histidine 152) interacts with (S)-2,3,4,5-tetrahydrodipicolinate. The active-site Proton donor is lysine 155. 161-162 contributes to the (S)-2,3,4,5-tetrahydrodipicolinate binding site; that stretch reads GT.

It belongs to the DapB family.

It is found in the cytoplasm. The enzyme catalyses (S)-2,3,4,5-tetrahydrodipicolinate + NAD(+) + H2O = (2S,4S)-4-hydroxy-2,3,4,5-tetrahydrodipicolinate + NADH + H(+). The catalysed reaction is (S)-2,3,4,5-tetrahydrodipicolinate + NADP(+) + H2O = (2S,4S)-4-hydroxy-2,3,4,5-tetrahydrodipicolinate + NADPH + H(+). Its pathway is amino-acid biosynthesis; L-lysine biosynthesis via DAP pathway; (S)-tetrahydrodipicolinate from L-aspartate: step 4/4. In terms of biological role, catalyzes the conversion of 4-hydroxy-tetrahydrodipicolinate (HTPA) to tetrahydrodipicolinate. This Dictyoglomus turgidum (strain DSM 6724 / Z-1310) protein is 4-hydroxy-tetrahydrodipicolinate reductase.